The following is a 206-amino-acid chain: MRPGRLRLLVGLGNPGSKYVGTRHNIGFMALDKLAGQKSVSFRPQTKFHGLMAEVGVGSERVRLLMPQTYMNESGRAIRAAIDWFGLEVDQLLVLVDDMDLPLGRLRLRAQGSAGGHNGLRSAIQHLGTQDFCRLRIGIGAPGCTSEERRARTVSHVLGVFSRQESLLVDQVLDEVLIGLDLIQCLGLERAGNRLNAFQPEGCSAC.

Y19 serves as a coordination point for tRNA. Catalysis depends on H24, which acts as the Proton acceptor. Residues Y70, N72, and N118 each contribute to the tRNA site.

It belongs to the PTH family. In terms of assembly, monomer.

Its subcellular location is the cytoplasm. The enzyme catalyses an N-acyl-L-alpha-aminoacyl-tRNA + H2O = an N-acyl-L-amino acid + a tRNA + H(+). Its function is as follows. Hydrolyzes ribosome-free peptidyl-tRNAs (with 1 or more amino acids incorporated), which drop off the ribosome during protein synthesis, or as a result of ribosome stalling. Catalyzes the release of premature peptidyl moieties from peptidyl-tRNA molecules trapped in stalled 50S ribosomal subunits, and thus maintains levels of free tRNAs and 50S ribosomes. In Prochlorococcus marinus (strain MIT 9303), this protein is Peptidyl-tRNA hydrolase.